A 316-amino-acid polypeptide reads, in one-letter code: Transaldolase 1 (316 aa).

K131 functions as the Schiff-base intermediate with substrate in the catalytic mechanism.

Belongs to the transaldolase family. Type 1 subfamily. In terms of assembly, homodimer.

The protein resides in the cytoplasm. It catalyses the reaction D-sedoheptulose 7-phosphate + D-glyceraldehyde 3-phosphate = D-erythrose 4-phosphate + beta-D-fructose 6-phosphate. It participates in carbohydrate degradation; pentose phosphate pathway; D-glyceraldehyde 3-phosphate and beta-D-fructose 6-phosphate from D-ribose 5-phosphate and D-xylulose 5-phosphate (non-oxidative stage): step 2/3. Functionally, transaldolase is important for the balance of metabolites in the pentose-phosphate pathway. The chain is Transaldolase 1 from Pectobacterium atrosepticum (strain SCRI 1043 / ATCC BAA-672) (Erwinia carotovora subsp. atroseptica).